We begin with the raw amino-acid sequence, 1281 residues long: Angiotensin-converting enzyme (1281 aa).

The N-terminal stretch at methionine 1–alanine 17 is a signal peptide. The Extracellular portion of the chain corresponds to leucine 18–alanine 1241. Peptidase M2 domains follow at residues aspartate 28–proline 610 and isoleucine 629–proline 1208. N-linked (GlcNAc...) asparagine glycosylation is found at asparagine 42, asparagine 62, asparagine 80, asparagine 99, and asparagine 148. The cysteines at positions 145 and 151 are disulfide-linked. Residue tyrosine 217 participates in chloride binding. A glycan (N-linked (GlcNAc...) asparagine) is linked at asparagine 304. Cysteine 345 and cysteine 363 are oxidised to a cystine. A Zn(2+)-binding site is contributed by histidine 376. The active-site Proton acceptor 1 is glutamate 377. Zn(2+) contacts are provided by histidine 380 and glutamate 404. A glycan (N-linked (GlcNAc...) asparagine) is linked at asparagine 495. Histidine 506 acts as the Proton donor 1 in catalysis. Residue arginine 515 coordinates chloride. A disulfide bridge links cysteine 531 with cysteine 543. Residues asparagine 535, asparagine 573, asparagine 601, asparagine 643, asparagine 663, and asparagine 746 are each glycosylated (N-linked (GlcNAc...) asparagine). Cysteine 743 and cysteine 749 are joined by a disulfide. 2 residues coordinate chloride: arginine 777 and tyrosine 815. A disulfide bond links cysteine 943 and cysteine 961. Histidine 974 lines the Zn(2+) pocket. Catalysis depends on glutamate 975, which acts as the Proton acceptor 2. Zn(2+) contacts are provided by histidine 978 and glutamate 1002. Positions 1076 and 1080 each coordinate chloride. The Proton donor 2 role is filled by histidine 1104. Arginine 1113 lines the chloride pocket. Cysteines 1129 and 1141 form a disulfide. The N-linked (GlcNAc...) asparagine glycan is linked to asparagine 1177. The juxtamembrane stalk stretch occupies residues asparagine 1201–threonine 1240. The chain crosses the membrane as a helical span at residues glycine 1242 to valine 1262. At lysine 1263–lysine 1281 the chain is on the cytoplasmic side.

This sequence belongs to the peptidase M2 family. It depends on Zn(2+) as a cofactor. The cofactor is chloride.

The protein localises to the cell membrane. It localises to the cytoplasm. It catalyses the reaction Release of a C-terminal dipeptide, oligopeptide-|-Xaa-Yaa, when Xaa is not Pro, and Yaa is neither Asp nor Glu. Thus, conversion of angiotensin I to angiotensin II, with increase in vasoconstrictor activity, but no action on angiotensin II.. It carries out the reaction angiotensin I + H2O = L-histidyl-L-leucine + angiotensin II. The enzyme catalyses bradykinin + H2O = L-Phe-L-Arg + bradykinin(1-7). The catalysed reaction is substance P + H2O = substance P(1-9) + L-Leu-L-Met-NH2. It catalyses the reaction substance P + H2O = substance P(1-8) + Gly-L-Leu-L-Met-NH2. It carries out the reaction substance P + H2O = L-Phe-L-Phe-Gly-L-Leu-L-Met-NH2 + substance P(1-6). The enzyme catalyses neurotensin + H2O = neurotensin(1-11) + L-isoleucyl-L-leucine. The catalysed reaction is goralatide + H2O = N-acetyl-L-seryl-L-aspartate + L-lysyl-L-proline. It catalyses the reaction Met-enkephalin + H2O = L-phenylalanyl-L-methionine + L-tyrosylglycylglycine. It carries out the reaction Leu-enkephalin + H2O = L-tyrosylglycylglycine + L-phenylalanyl-L-leucine. The enzyme catalyses Met-enkephalin-Arg-Phe + H2O = L-arginyl-L-phenylalanine + Met-enkephalin. In terms of biological role, dipeptidyl carboxypeptidase that removes dipeptides from the C-terminus of a variety of circulating hormones, such as angiotensin I, bradykinin or enkephalins, thereby playing a key role in the regulation of blood pressure, electrolyte homeostasis or synaptic plasticity. Composed of two similar catalytic domains, each possessing a functional active site, with different selectivity for substrates. Plays a major role in the angiotensin-renin system that regulates blood pressure and sodium retention by the kidney by converting angiotensin I to angiotensin II, resulting in an increase of the vasoconstrictor activity of angiotensin. Also able to inactivate bradykinin, a potent vasodilator, and therefore enhance the blood pressure response. Acts as a regulator of synaptic transmission by mediating cleavage of neuropeptide hormones, such as substance P, neurotensin or enkephalins. Catalyzes degradation of different enkephalin neuropeptides (Met-enkephalin, Leu-enkephalin, Met-enkephalin-Arg-Phe and possibly Met-enkephalin-Arg-Gly-Leu). Also acts as a regulator of hematopoietic stem cell differentiation by mediating degradation of hemoregulatory peptide N-acetyl-SDKP (AcSDKP). The chain is Angiotensin-converting enzyme from Gallus gallus (Chicken).